We begin with the raw amino-acid sequence, 210 residues long: BAG family molecular chaperone regulator 2 (210 aa).

At Ala-2 the chain carries N-acetylalanine. 3 positions are modified to phosphoserine: Ser-20, Ser-31, and Ser-73. A coiled-coil region spans residues 20–60; it reads SMADRSSRLLESLDQLELRVEALRDAATAVEQEKEILLEMI. Residues 109–189 enclose the BAG domain; it reads SLKHATRIID…NIDNSDKAIK (81 aa).

As to quaternary structure, binds to the ATPase domain of HSP/HSC70 chaperones. May interact with NWD1. Interacts with HSPA1A (via NBD), HSPA1B (via NBD) and HSPA8. May interact with DNJC9; the interaction seems to be histone-dependent.

In terms of biological role, co-chaperone for HSP70 and HSC70 chaperone proteins. Acts as a nucleotide-exchange factor (NEF) promoting the release of ADP from the HSP70 and HSC70 proteins thereby triggering client/substrate protein release. The chain is BAG family molecular chaperone regulator 2 (Bag2) from Mus musculus (Mouse).